The following is a 146-amino-acid chain: 16.0 kDa heat shock protein, peroxisomal (146 aa).

In terms of domain architecture, sHSP spans 23 to 143 (WASASATAAM…RPRTRPIAVS (121 aa)). The Microbody targeting signal signature appears at 144 to 146 (SKL).

This sequence belongs to the small heat shock protein (HSP20) family. May form oligomeric structures.

Its subcellular location is the peroxisome. In Oryza sativa subsp. japonica (Rice), this protein is 16.0 kDa heat shock protein, peroxisomal (HSP16.0).